The chain runs to 20 residues: Cytochrome c oxidase subunit 6A2, mitochondrial (20 aa).

The segment at 1–20 (ASGAKGDHGGAGASTXXLLT) is disordered.

The protein belongs to the cytochrome c oxidase subunit 6A family. As to quaternary structure, component of the cytochrome c oxidase (complex IV, CIV), a multisubunit enzyme composed of 14 subunits. The complex is composed of a catalytic core of 3 subunits MT-CO1, MT-CO2 and MT-CO3, encoded in the mitochondrial DNA, and 11 supernumerary subunits COX4I, COX5A, COX5B, COX6A, COX6B, COX6C, COX7A, COX7B, COX7C, COX8 and NDUFA4, which are encoded in the nuclear genome. The complex exists as a monomer or a dimer and forms supercomplexes (SCs) in the inner mitochondrial membrane with NADH-ubiquinone oxidoreductase (complex I, CI) and ubiquinol-cytochrome c oxidoreductase (cytochrome b-c1 complex, complex III, CIII), resulting in different assemblies (supercomplex SCI(1)III(2)IV(1) and megacomplex MCI(2)III(2)IV(2)). Heart specific isoform.

Its subcellular location is the mitochondrion inner membrane. It participates in energy metabolism; oxidative phosphorylation. Its function is as follows. Component of the cytochrome c oxidase, the last enzyme in the mitochondrial electron transport chain which drives oxidative phosphorylation. The respiratory chain contains 3 multisubunit complexes succinate dehydrogenase (complex II, CII), ubiquinol-cytochrome c oxidoreductase (cytochrome b-c1 complex, complex III, CIII) and cytochrome c oxidase (complex IV, CIV), that cooperate to transfer electrons derived from NADH and succinate to molecular oxygen, creating an electrochemical gradient over the inner membrane that drives transmembrane transport and the ATP synthase. Cytochrome c oxidase is the component of the respiratory chain that catalyzes the reduction of oxygen to water. Electrons originating from reduced cytochrome c in the intermembrane space (IMS) are transferred via the dinuclear copper A center (CU(A)) of subunit 2 and heme A of subunit 1 to the active site in subunit 1, a binuclear center (BNC) formed by heme A3 and copper B (CU(B)). The BNC reduces molecular oxygen to 2 water molecules unsing 4 electrons from cytochrome c in the IMS and 4 protons from the mitochondrial matrix. Plays a role in the assembly and stabilization of complex IV. The chain is Cytochrome c oxidase subunit 6A2, mitochondrial (COX6A2) from Canis lupus familiaris (Dog).